The following is a 505-amino-acid chain: MKNEKKKSGIEPKVFFPPLIIVGILCWLTVRDLDAANVVINAVFSYVTNVWGWAFEWYMVVMLFGWFWLVFGPYAKKRLGDEKPEFSTASWIFMMFASCTSAAVLFWGSIEIYYYISTPPFGLEPNSTGAKEIGLAYSLFHWGPLPWATYSFLSVAFAYFFFVRKMDVIRPSSTLVPLVGEKHAKGLFGTIVDNFYLVALIFAMGTSLGLATPLVTECMQWLFGIPHTLQLDAIIITCWIILNAICVACGLQKGVRIASDVRSYLSFLMLGWVFIVSGASFIMNYFTDSVGMLLMHLPRMLFYTDAIGKGGFPQGWTVFYWAWWVIYAIQMSIFLARISRGRTVRELCFGMVMGLTASTWILWTVLGSNTLLLMDKNILNIPQLIEQHGVARAIIETWAALPLSTATMWGFFILCFIATVTLINACSYTLAMSTCREVRDGEEPPLLVRIGWSVLVGIIGIVLLALGGLKPIQTAIIAGGCPLFFVNIMVTLSFIKDAKVHWKDK.

Helical transmembrane passes span 10–30, 51–71, 92–112, 143–163, 195–215, 231–251, 263–283, 316–336, 347–367, 403–423, 446–466, and 475–495; these read IEPKVFFPPLIIVGILCWLTV, WGWAFEWYMVVMLFGWFWLVF, IFMMFASCTSAAVLFWGSIEI, GPLPWATYSFLSVAFAYFFFV, FYLVALIFAMGTSLGLATPLV, LDAIIITCWIILNAICVACGL, SYLSFLMLGWVFIVSGASFIM, WTVFYWAWWVIYAIQMSIFLA, LCFGMVMGLTASTWILWTVLG, LSTATMWGFFILCFIATVTLI, LLVRIGWSVLVGIIGIVLLAL, and AIIAGGCPLFFVNIMVTLSFI.

This sequence belongs to the BCCT transporter (TC 2.A.15) family. CaiT subfamily. In terms of assembly, homotrimer.

The protein resides in the cell inner membrane. The catalysed reaction is 4-(trimethylamino)butanoate(in) + (R)-carnitine(out) = 4-(trimethylamino)butanoate(out) + (R)-carnitine(in). The protein operates within amine and polyamine metabolism; carnitine metabolism. Functionally, catalyzes the exchange of L-carnitine for gamma-butyrobetaine. This is L-carnitine/gamma-butyrobetaine antiporter from Salmonella agona (strain SL483).